The primary structure comprises 185 residues: Ribosome-recycling factor (185 aa).

This sequence belongs to the RRF family.

The protein resides in the cytoplasm. Responsible for the release of ribosomes from messenger RNA at the termination of protein biosynthesis. May increase the efficiency of translation by recycling ribosomes from one round of translation to another. The polypeptide is Ribosome-recycling factor (Haemophilus influenzae (strain ATCC 51907 / DSM 11121 / KW20 / Rd)).